The following is a 284-amino-acid chain: Nucleotide-binding protein Sbal_3671 (284 aa).

8-15 (GRSGSGKS) contributes to the ATP binding site. 56-59 (DVRN) is a binding site for GTP.

It belongs to the RapZ-like family.

Functionally, displays ATPase and GTPase activities. The sequence is that of Nucleotide-binding protein Sbal_3671 from Shewanella baltica (strain OS155 / ATCC BAA-1091).